A 1267-amino-acid chain; its full sequence is DNA-directed RNA polymerase subunit beta'' (1267 aa).

4 residues coordinate Zn(2+): cysteine 222, cysteine 290, cysteine 297, and cysteine 300.

It belongs to the RNA polymerase beta' chain family. RpoC2 subfamily. In plastids the minimal PEP RNA polymerase catalytic core is composed of four subunits: alpha, beta, beta', and beta''. When a (nuclear-encoded) sigma factor is associated with the core the holoenzyme is formed, which can initiate transcription. Zn(2+) serves as cofactor.

The protein localises to the plastid. It localises to the chloroplast. The catalysed reaction is RNA(n) + a ribonucleoside 5'-triphosphate = RNA(n+1) + diphosphate. Functionally, DNA-dependent RNA polymerase catalyzes the transcription of DNA into RNA using the four ribonucleoside triphosphates as substrates. The sequence is that of DNA-directed RNA polymerase subunit beta'' from Emiliania huxleyi (Coccolithophore).